The primary structure comprises 185 residues: Imidazoleglycerol-phosphate dehydratase (185 aa).

This sequence belongs to the imidazoleglycerol-phosphate dehydratase family.

It is found in the cytoplasm. It carries out the reaction D-erythro-1-(imidazol-4-yl)glycerol 3-phosphate = 3-(imidazol-4-yl)-2-oxopropyl phosphate + H2O. It participates in amino-acid biosynthesis; L-histidine biosynthesis; L-histidine from 5-phospho-alpha-D-ribose 1-diphosphate: step 6/9. In Pyrobaculum arsenaticum (strain DSM 13514 / JCM 11321 / PZ6), this protein is Imidazoleglycerol-phosphate dehydratase.